Reading from the N-terminus, the 337-residue chain is DnaJ homolog dnj-2 (337 aa).

Residues Ala4–Val24 traverse the membrane as a helical segment. The J domain maps to Asn36–Leu105. Helical transmembrane passes span Val127–Ser147 and Leu222–Leu242. Positions Leu293 to Arg323 form a coiled coil.

This sequence belongs to the DNAJC25 family.

It localises to the membrane. The polypeptide is DnaJ homolog dnj-2 (dnj-2) (Caenorhabditis elegans).